A 79-amino-acid polypeptide reads, in one-letter code: Hemoglobin subunit zeta (79 aa).

The residue at position 1 (serine 1) is an N-acetylserine. The region spanning serine 1–valine 79 is the Globin domain. A phosphoserine mark is found at serine 38 and serine 53. Histidine 59 serves as a coordination point for heme b.

The protein belongs to the globin family. As to quaternary structure, heterotetramer of two zeta chains and two epsilon chains.

Functionally, the zeta chain is an alpha-type chain of mammalian embryonic hemoglobin. In Notamacropus eugenii (Tammar wallaby), this protein is Hemoglobin subunit zeta.